We begin with the raw amino-acid sequence, 158 residues long: Protein OPG060 (158 aa).

Belongs to the orthopoxvirus OPG058 family.

The chain is Protein OPG060 (OPG060) from Homo sapiens (Human).